The following is a 55-amino-acid chain: Large ribosomal subunit protein bL33 (55 aa).

Belongs to the bacterial ribosomal protein bL33 family.

The polypeptide is Large ribosomal subunit protein bL33 (Granulibacter bethesdensis (strain ATCC BAA-1260 / CGDNIH1)).